The chain runs to 680 residues: Dihydroxyacetone phosphate acyltransferase (680 aa).

Ser12 and Ser17 each carry phosphoserine. Residues 162-167 (HRSYID) carry the HXXXXD motif motif. Lys643 bears the N6-acetyllysine mark. Positions 678-680 (AKL) match the Microbody targeting signal motif.

Belongs to the GPAT/DAPAT family. As to quaternary structure, part of a heterotrimeric complex composed of GNPAT, AGPS and a modified form of GNPAT.

It is found in the peroxisome membrane. The catalysed reaction is dihydroxyacetone phosphate + an acyl-CoA = a 1-acylglycerone 3-phosphate + CoA. The enzyme catalyses dihydroxyacetone phosphate + hexadecanoyl-CoA = 1-hexadecanoylglycerone 3-phosphate + CoA. Its pathway is membrane lipid metabolism; glycerophospholipid metabolism. Its function is as follows. Dihydroxyacetonephosphate acyltransferase catalyzing the first step in the biosynthesis of plasmalogens, a subset of phospholipids that differ from other glycerolipids by having an alkyl chain attached through a vinyl ether linkage at the sn-1 position of the glycerol backbone, and which unique physical properties have an impact on various aspects of cell signaling and membrane biology. This chain is Dihydroxyacetone phosphate acyltransferase, found in Homo sapiens (Human).